Here is a 362-residue protein sequence, read N- to C-terminus: UDP-N-acetylglucosamine--N-acetylmuramyl-(pentapeptide) pyrophosphoryl-undecaprenol N-acetylglucosamine transferase (362 aa).

UDP-N-acetyl-alpha-D-glucosamine-binding positions include 21–23 (TGG), Asn-129, Arg-170, Ser-198, and Gln-290.

It belongs to the glycosyltransferase 28 family. MurG subfamily.

Its subcellular location is the cell inner membrane. The catalysed reaction is di-trans,octa-cis-undecaprenyl diphospho-N-acetyl-alpha-D-muramoyl-L-alanyl-D-glutamyl-meso-2,6-diaminopimeloyl-D-alanyl-D-alanine + UDP-N-acetyl-alpha-D-glucosamine = di-trans,octa-cis-undecaprenyl diphospho-[N-acetyl-alpha-D-glucosaminyl-(1-&gt;4)]-N-acetyl-alpha-D-muramoyl-L-alanyl-D-glutamyl-meso-2,6-diaminopimeloyl-D-alanyl-D-alanine + UDP + H(+). It participates in cell wall biogenesis; peptidoglycan biosynthesis. In terms of biological role, cell wall formation. Catalyzes the transfer of a GlcNAc subunit on undecaprenyl-pyrophosphoryl-MurNAc-pentapeptide (lipid intermediate I) to form undecaprenyl-pyrophosphoryl-MurNAc-(pentapeptide)GlcNAc (lipid intermediate II). This Synechococcus sp. (strain JA-3-3Ab) (Cyanobacteria bacterium Yellowstone A-Prime) protein is UDP-N-acetylglucosamine--N-acetylmuramyl-(pentapeptide) pyrophosphoryl-undecaprenol N-acetylglucosamine transferase.